The primary structure comprises 340 residues: 4-dimethylallyltryptophan N-methyltransferase ifgB (340 aa).

It belongs to the methyltransferase superfamily. In terms of assembly, homodimer.

The catalysed reaction is 4-(3-methylbut-2-enyl)-L-tryptophan + S-adenosyl-L-methionine = 4-(3-methylbut-2-enyl)-L-abrine + S-adenosyl-L-homocysteine + H(+). It functions in the pathway alkaloid biosynthesis; ergot alkaloid biosynthesis. Its function is as follows. 4-dimethylallyltryptophan N-methyltransferase; part of the gene cluster that mediates the biosynthesis of isofumigaclavines, fungal ergot alkaloids. The tryptophan dimethylallyltransferase ifgA catalyzes the first step of ergot alkaloid biosynthesis by condensing dimethylallyl diphosphate (DMAP) and tryptophan to form 4-dimethylallyl-L-tryptophan. The second step is catalyzed by the methyltransferase ifgB that methylates 4-dimethylallyl-L-tryptophan in the presence of S-adenosyl-L-methionine, resulting in the formation of N-methyl-dimethylallyl-L-tryptophan. The catalase ifgD and the FAD-dependent oxidoreductase ifgC then transform N-methyl-dimethylallyl-L-tryptophan to chanoclavine-I which is further oxidized by ifgE in the presence of NAD(+), resulting in the formation of chanoclavine-I aldehyde. The chanoclavine-I aldehyde reductases ifgG and/or fgaOx3 reduce chanoclavine-I aldehyde to dihydrochanoclavine-I aldehyde that spontaneously dehydrates to form 6,8-dimethyl-6,7-didehydroergoline. The festuclavine dehydrogenases ifgF1 and/or ifgF2 then catalyze the reduction of 6,8-dimethyl-6,7-didehydroergoline to form festuclavine. Hydrolysis of festuclavine by a yet undetermined cytochrome P450 monooxygenase (called ifgH) then leads to the formation of isofumigaclavine B which is in turn acetylated by ifgI to isofumigaclavine A. Penicillium roqueforti has interestingly at least two sets of genes for the consumption of chanoclavine-I aldehyde on three different loci, the OYEs ifgG/fgaOx3 and the festuclavine synthase homologs ifgF1/ifgF2. The reason for the duplication of these genes is unclear, probably to ensure the conversion of chanoclavine-I aldehyde by differential gene expression under various environmental conditions. The polypeptide is 4-dimethylallyltryptophan N-methyltransferase ifgB (Penicillium roqueforti (strain FM164)).